Here is a 365-residue protein sequence, read N- to C-terminus: UPF0718 protein MJ0584 (365 aa).

Transmembrane regions (helical) follow at residues 6-26, 32-52, 67-87, 108-128, 130-150, 174-194, 201-221, 245-265, 282-302, 308-328, and 344-364; these read MSFIMNIINVMINTIIDYLNV, LLMAFLMAGGIASMINKNFII, VAAVSGSLLAVCSCTILPLFA, AINVLAIFYSAALLGWDIGFL, AVFAVVVSILIGLSMEIIFKS, ITFFALQFIMLLVITASPKLF, LYDGFLLKHLLFIILGIILAV, IVFPLLIIGVAIAGAIKAIIP, FIASFIGALMYFATLTEVPII, LGMGVGPAMALLLAGPSLSIP, and TYLGLVVIFSTICGYIAGIIL.

Belongs to the UPF0718 family.

It is found in the cell membrane. In Methanocaldococcus jannaschii (strain ATCC 43067 / DSM 2661 / JAL-1 / JCM 10045 / NBRC 100440) (Methanococcus jannaschii), this protein is UPF0718 protein MJ0584.